We begin with the raw amino-acid sequence, 847 residues long: UPF0182 protein CYB_0372 (847 aa).

7 consecutive transmembrane segments (helical) span residues Gly7–Phe27, Trp51–Ser71, Ala76–Leu96, Phe141–Leu161, Leu168–Ile188, Leu220–Leu240, and Trp259–Leu279.

The protein belongs to the UPF0182 family.

The protein resides in the cell membrane. The protein is UPF0182 protein CYB_0372 of Synechococcus sp. (strain JA-2-3B'a(2-13)) (Cyanobacteria bacterium Yellowstone B-Prime).